Here is a 282-residue protein sequence, read N- to C-terminus: F-actin-capping protein subunit beta (282 aa).

Positions 73–103 (SPWSNQFDPPLDEAGSGGVGAGGNEGAGEGA) are disordered. The segment covering 87–101 (GSGGVGAGGNEGAGE) has biased composition (gly residues).

It belongs to the F-actin-capping protein beta subunit family. In terms of assembly, component of the F-actin capping complex, composed of a heterodimer of an alpha and a beta subunit.

The protein localises to the cytoplasm. The protein resides in the cytoskeleton. It localises to the actin patch. F-actin-capping proteins bind in a Ca(2+)-independent manner to the fast growing ends of actin filaments (barbed end) thereby blocking the exchange of subunits at these ends. Unlike other capping proteins (such as gelsolin and severin), these proteins do not sever actin filaments. This is F-actin-capping protein subunit beta (CAP2) from Gibberella zeae (strain ATCC MYA-4620 / CBS 123657 / FGSC 9075 / NRRL 31084 / PH-1) (Wheat head blight fungus).